A 261-amino-acid polypeptide reads, in one-letter code: Ethanolamine ammonia-lyase small subunit (261 aa).

3 residues coordinate adenosylcob(III)alamin: Val-157, Glu-178, and Cys-207.

It belongs to the EutC family. As to quaternary structure, the basic unit is a heterodimer which dimerizes to form tetramers. The heterotetramers trimerize; 6 large subunits form a core ring with 6 small subunits projecting outwards. Requires adenosylcob(III)alamin as cofactor.

Its subcellular location is the bacterial microcompartment. It carries out the reaction ethanolamine = acetaldehyde + NH4(+). It participates in amine and polyamine degradation; ethanolamine degradation. In terms of biological role, catalyzes the deamination of various vicinal amino-alcohols to oxo compounds. Allows this organism to utilize ethanolamine as the sole source of nitrogen and carbon in the presence of external vitamin B12. This is Ethanolamine ammonia-lyase small subunit from Rhodopseudomonas palustris (strain BisA53).